We begin with the raw amino-acid sequence, 859 residues long: Nitrate reductase [NADPH] (859 aa).

Cys137 lines the Mo-molybdopterin pocket. Residues Asp502–Glu578 enclose the Cytochrome b5 heme-binding domain. Residues His538 and His561 each contribute to the heme site. An FAD-binding FR-type domain is found at Arg602–Val713. FAD contacts are provided by residues Arg655–Thr658, Leu672–Tyr676, Phe677, Ile687–Thr689, Ser737, and Thr740. Position 829–838 (Met829–Met838) interacts with NADP(+).

This sequence belongs to the nitrate reductase family. Homodimer. It depends on FAD as a cofactor. Requires heme as cofactor. Mo-molybdopterin serves as cofactor.

The enzyme catalyses nitrite + NADP(+) + H2O = nitrate + NADPH + H(+). In terms of biological role, nitrate reductase is a key enzyme involved in the first step of nitrate assimilation in plants, fungi and bacteria. In Pichia angusta (Yeast), this protein is Nitrate reductase [NADPH] (YNR1).